Reading from the N-terminus, the 284-residue chain is Tropomyosin (284 aa).

Residues 1–54 form a disordered region; that stretch reads MDAIKKKMQAMKLEKDNAMDRADTLEQQNKEANNRAEKTEEEIRATQKKMQQVE. Positions 1-273 form a coiled coil; that stretch reads MDAIKKKMQA…KEKYKSITDE (273 aa). Basic and acidic residues predominate over residues 12–45; the sequence is KLEKDNAMDRADTLEQQNKEANNRAEKTEEEIRA.

Belongs to the tropomyosin family. Homodimer. In terms of tissue distribution, muscle (at protein level). Expressed in leg and chest protection muscle (at protein level). Expressed in claw muscle.

In terms of biological role, tropomyosin, in association with the troponin complex, plays a central role in the calcium dependent regulation of muscle contraction. This chain is Tropomyosin, found in Eriocheir sinensis (Chinese mitten crab).